The sequence spans 1284 residues: 1,6-alpha-glucosyltransferase (1284 aa).

The first 35 residues, 1–35, serve as a signal peptide directing secretion; sequence MRPPNKEIPRILAFFTAFTLFGSTLALLPAPPAHA. The active-site Nucleophile is Asp-433. Asp-436 is a catalytic residue. Catalysis depends on Asp-495, which acts as the Proton donor. 2 consecutive CBM6 domains span residues 856-988 and 994-1120; these read SQYE…ITVP and GKYE…LLLS.

Belongs to the glycosyl hydrolase 31 family.

The protein localises to the secreted. It carries out the reaction 2 D-maltotetraose = alpha-isomaltosyl-(1-&gt;4)-D-maltotriose + D-maltotriose. The enzyme catalyses Transfers an alpha-D-glucosyl residue in a (1-&gt;4)-alpha-D-glucan to the primary hydroxy group of glucose, free or combined in a (1-&gt;4)-alpha-D-glucan.. Its activity is regulated as follows. Strongly activated and stabilized by various divalent cations. Strongly inhibited by Cu(2+), Hg(2+) and EDTA, and moderately inhibited by Tris. In terms of biological role, glycosyltransferase involved, together with CtsY, in the conversion of alpha-1,4-glucan into a cyclic tetrasaccharide (CTS) constructed from four alpha-glucopyranosyl residues. Catalyzes an intermolecular transglucosylation in which a glucose residue at the non-reducing end of maltotetraose is transferred to the 6-OH of an other non-reducing glucose, leading to the formation of alpha-isomaltosyl-(1-&gt;4)-D-maltotriose. Has a wide substrate specificity, and acts on oligosaccharides with alpha-1,4-glucosidic linkages at the non-reducing end, except for maltose. In contrast, has little activity toward oligosaccharides with alpha-1,6-glucosidic linkages at the non-reducing end. The protein is 1,6-alpha-glucosyltransferase of Sporosarcina globispora (Bacillus globisporus).